A 954-amino-acid chain; its full sequence is Glycine dehydrogenase (decarboxylating) (954 aa).

Residue lysine 704 is modified to N6-(pyridoxal phosphate)lysine.

The protein belongs to the GcvP family. As to quaternary structure, the glycine cleavage system is composed of four proteins: P, T, L and H. Pyridoxal 5'-phosphate serves as cofactor.

It catalyses the reaction N(6)-[(R)-lipoyl]-L-lysyl-[glycine-cleavage complex H protein] + glycine + H(+) = N(6)-[(R)-S(8)-aminomethyldihydrolipoyl]-L-lysyl-[glycine-cleavage complex H protein] + CO2. In terms of biological role, the glycine cleavage system catalyzes the degradation of glycine. The P protein binds the alpha-amino group of glycine through its pyridoxal phosphate cofactor; CO(2) is released and the remaining methylamine moiety is then transferred to the lipoamide cofactor of the H protein. The protein is Glycine dehydrogenase (decarboxylating) of Rhizobium etli (strain ATCC 51251 / DSM 11541 / JCM 21823 / NBRC 15573 / CFN 42).